The sequence spans 488 residues: ATP synthase subunit beta (488 aa).

164–171 (GGAGVGKT) contacts ATP.

Belongs to the ATPase alpha/beta chains family. In terms of assembly, F-type ATPases have 2 components, CF(1) - the catalytic core - and CF(0) - the membrane proton channel. CF(1) has five subunits: alpha(3), beta(3), gamma(1), delta(1), epsilon(1). CF(0) has four main subunits: a(1), b(1), b'(1) and c(9-12).

Its subcellular location is the cellular thylakoid membrane. It catalyses the reaction ATP + H2O + 4 H(+)(in) = ADP + phosphate + 5 H(+)(out). In terms of biological role, produces ATP from ADP in the presence of a proton gradient across the membrane. The catalytic sites are hosted primarily by the beta subunits. This Prochlorococcus marinus (strain MIT 9211) protein is ATP synthase subunit beta.